We begin with the raw amino-acid sequence, 126 residues long: Small ribosomal subunit protein uS12 (126 aa).

Asp89 bears the 3-methylthioaspartic acid mark.

The protein belongs to the universal ribosomal protein uS12 family. In terms of assembly, part of the 30S ribosomal subunit. Contacts proteins S8 and S17. May interact with IF1 in the 30S initiation complex.

Its function is as follows. With S4 and S5 plays an important role in translational accuracy. Functionally, interacts with and stabilizes bases of the 16S rRNA that are involved in tRNA selection in the A site and with the mRNA backbone. Located at the interface of the 30S and 50S subunits, it traverses the body of the 30S subunit contacting proteins on the other side and probably holding the rRNA structure together. The combined cluster of proteins S8, S12 and S17 appears to hold together the shoulder and platform of the 30S subunit. The sequence is that of Small ribosomal subunit protein uS12 from Sulfurimonas denitrificans (strain ATCC 33889 / DSM 1251) (Thiomicrospira denitrificans (strain ATCC 33889 / DSM 1251)).